The following is a 554-amino-acid chain: Valerianol synthase TPS1C (554 aa).

Mg(2+)-binding residues include aspartate 307 and aspartate 311. A DDXXD motif motif is present at residues 326-330 (VQRWD). Mg(2+)-binding residues include aspartate 452, serine 456, and glutamate 460.

This sequence belongs to the terpene synthase family. It depends on Mg(2+) as a cofactor.

The catalysed reaction is (2E,6E)-farnesyl diphosphate + H2O = valerianol + diphosphate. The protein operates within secondary metabolite biosynthesis; terpenoid biosynthesis. Terpene synthase that catalyzes the biosynthesis of the terpene valerianol, which is a volatile compound of floral scent. The chain is Valerianol synthase TPS1C from Camellia hiemalis (Camellia).